A 357-amino-acid chain; its full sequence is Peptide chain release factor 1 (357 aa).

Glutamine 236 bears the N5-methylglutamine mark.

The protein belongs to the prokaryotic/mitochondrial release factor family. Methylated by PrmC. Methylation increases the termination efficiency of RF1.

It localises to the cytoplasm. Peptide chain release factor 1 directs the termination of translation in response to the peptide chain termination codons UAG and UAA. The chain is Peptide chain release factor 1 from Mycolicibacterium vanbaalenii (strain DSM 7251 / JCM 13017 / BCRC 16820 / KCTC 9966 / NRRL B-24157 / PYR-1) (Mycobacterium vanbaalenii).